The following is a 115-amino-acid chain: Large ribosomal subunit protein bL20 (115 aa).

The protein belongs to the bacterial ribosomal protein bL20 family.

In terms of biological role, binds directly to 23S ribosomal RNA and is necessary for the in vitro assembly process of the 50S ribosomal subunit. It is not involved in the protein synthesizing functions of that subunit. This is Large ribosomal subunit protein bL20 from Prochlorococcus marinus (strain MIT 9215).